Consider the following 447-residue polypeptide: N-succinylarginine dihydrolase (447 aa).

Substrate-binding positions include 19-28 (AGLSFGNEAS), asparagine 110, and 137-138 (HR). Glutamate 174 is a catalytic residue. Arginine 212 contacts substrate. The active site involves histidine 248. Residues aspartate 250 and asparagine 359 each contribute to the substrate site. Cysteine 365 serves as the catalytic Nucleophile.

The protein belongs to the succinylarginine dihydrolase family. As to quaternary structure, homodimer.

It carries out the reaction N(2)-succinyl-L-arginine + 2 H2O + 2 H(+) = N(2)-succinyl-L-ornithine + 2 NH4(+) + CO2. It functions in the pathway amino-acid degradation; L-arginine degradation via AST pathway; L-glutamate and succinate from L-arginine: step 2/5. In terms of biological role, catalyzes the hydrolysis of N(2)-succinylarginine into N(2)-succinylornithine, ammonia and CO(2). The chain is N-succinylarginine dihydrolase from Escherichia coli (strain SMS-3-5 / SECEC).